The chain runs to 227 residues: Adenylate kinase (227 aa).

G21–T26 is a binding site for ATP. The interval A41–V70 is NMP. Residues T42, R47, K68–V70, G97–R100, and Q104 contribute to the AMP site. The tract at residues G138 to D175 is LID. ATP-binding positions include R139 and S148–Y149. 2 residues coordinate AMP: R172 and R183. Q211 contacts ATP.

Belongs to the adenylate kinase family. AK2 subfamily. As to quaternary structure, monomer.

The protein resides in the cytoplasm. It is found in the cytosol. The protein localises to the mitochondrion intermembrane space. It carries out the reaction AMP + ATP = 2 ADP. Its function is as follows. Catalyzes the reversible transfer of the terminal phosphate group between ATP and AMP. Plays an important role in cellular energy homeostasis and in adenine nucleotide metabolism. Adenylate kinase activity is critical for regulation of the phosphate utilization and the AMP de novo biosynthesis pathways. This is Adenylate kinase from Kluyveromyces lactis (strain ATCC 8585 / CBS 2359 / DSM 70799 / NBRC 1267 / NRRL Y-1140 / WM37) (Yeast).